The following is a 1001-amino-acid chain: 2-oxoglutarate dehydrogenase E1 component (1001 aa).

Belongs to the alpha-ketoglutarate dehydrogenase family. In terms of assembly, homodimer. Part of the 2-oxoglutarate dehydrogenase (OGDH) complex composed of E1 (2-oxoglutarate dehydrogenase), E2 (dihydrolipoamide succinyltransferase) and E3 (dihydrolipoamide dehydrogenase); the complex contains multiple copies of the three enzymatic components (E1, E2 and E3). The cofactor is thiamine diphosphate.

It catalyses the reaction N(6)-[(R)-lipoyl]-L-lysyl-[protein] + 2-oxoglutarate + H(+) = N(6)-[(R)-S(8)-succinyldihydrolipoyl]-L-lysyl-[protein] + CO2. Its function is as follows. E1 component of the 2-oxoglutarate dehydrogenase (OGDH) complex which catalyzes the decarboxylation of 2-oxoglutarate, the first step in the conversion of 2-oxoglutarate to succinyl-CoA and CO(2). The chain is 2-oxoglutarate dehydrogenase E1 component from Brucella anthropi (strain ATCC 49188 / DSM 6882 / CCUG 24695 / JCM 21032 / LMG 3331 / NBRC 15819 / NCTC 12168 / Alc 37) (Ochrobactrum anthropi).